We begin with the raw amino-acid sequence, 378 residues long: Metacaspase-1B (378 aa).

The disordered stretch occupies residues M1–A70. The segment covering Q10–G29 has biased composition (low complexity). Residues H169 and C225 contribute to the active site.

This sequence belongs to the peptidase C14B family.

Involved in cell death (apoptosis). The protein is Metacaspase-1B (casB) of Aspergillus terreus (strain NIH 2624 / FGSC A1156).